The chain runs to 588 residues: Autophagy-related protein 22-1 (588 aa).

A helical transmembrane segment spans residues 35-55 (YGWAAEVFTVCAMGSFLPITL). An N-linked (GlcNAc...) asparagine glycan is attached at asparagine 84. 3 helical membrane-spanning segments follow: residues 109-129 (TASF…ILII), 144-164 (LLVS…AVTP), and 168-188 (LLGG…FVLL). Asparagine 255 carries an N-linked (GlcNAc...) asparagine glycan. The next 8 helical transmembrane spans lie at 270 to 290 (GIGI…LVIV), 301 to 321 (LVLF…AFWL), 365 to 385 (ILLF…VSGT), 399 to 419 (AALG…AFSW), 434 to 454 (IIAC…GFIP), 471 to 493 (FPLG…SFFG), 507 to 527 (LYAI…GFIT), and 536 to 556 (AFFF…LVDA).

The protein belongs to the ATG22 family.

Its subcellular location is the vacuole membrane. In terms of biological role, vacuolar effluxer which mediate the efflux of amino acids resulting from autophagic degradation. The release of autophagic amino acids allows the maintenance of protein synthesis and viability during nitrogen starvation. The chain is Autophagy-related protein 22-1 (atg22-1) from Emericella nidulans (strain FGSC A4 / ATCC 38163 / CBS 112.46 / NRRL 194 / M139) (Aspergillus nidulans).